The chain runs to 476 residues: Probable protein S-acyltransferase 5 (476 aa).

Residues 1–11 are compositionally biased toward basic and acidic residues; the sequence is MLDLQPSDRRH. A disordered region spans residues 1–21; sequence MLDLQPSDRRHGAPSSSGGVS. The next 2 membrane-spanning stretches (helical) occupy residues 53–73 and 85–105; these read SILI…IFVG and GVSV…FLLL. Positions 119–138 are disordered; that stretch reads YPPEPESNEGNGEPRLAHTP. A DHHC domain is found at 158–208; that stretch reads KYCDTCMLYRPPRASHCSICNNCVEKFDHHCPWLGQCIGLRNYRFYFMFVL. Residue Cys188 is the S-palmitoyl cysteine intermediate of the active site. 2 helical membrane passes run 209–223 and 246–266; these read CSTL…FCWI and SIAL…LTCF. 2 disordered regions span residues 320–340 and 373–454; these read SKEP…PSLQ and VASR…ASRD. Residue Ser336 is modified to Phosphoserine. Residues 387-412 show a composition bias toward basic and acidic residues; the sequence is SEGRGIMHSRESSRGRGIMHSRESSR. Position 418 is a phosphoserine (Ser418). Residues 425–441 are compositionally biased toward basic and acidic residues; that stretch reads VNEDLRTRDESVSRVGE.

The protein belongs to the DHHC palmitoyltransferase family.

The protein localises to the cell membrane. It carries out the reaction L-cysteinyl-[protein] + hexadecanoyl-CoA = S-hexadecanoyl-L-cysteinyl-[protein] + CoA. Functionally, palmitoyl acyltransferase. This Arabidopsis thaliana (Mouse-ear cress) protein is Probable protein S-acyltransferase 5 (PAT05).